The chain runs to 460 residues: Bifunctional protein GlmU (460 aa).

Positions 1-229 (MTNYAIILAA…FNESLGVNDR (229 aa)) are pyrophosphorylase. UDP-N-acetyl-alpha-D-glucosamine-binding positions include 8 to 11 (LAAG), Lys-22, Gln-72, and 77 to 78 (GT). Asp-102 lines the Mg(2+) pocket. UDP-N-acetyl-alpha-D-glucosamine contacts are provided by Gly-139, Glu-154, Asn-169, and Asn-227. Asn-227 contributes to the Mg(2+) binding site. The segment at 230-250 (VALATAETVMRQRITQKHMVN) is linker. Residues 251 to 460 (GVTFHNPETV…RLAHHPSRSK (210 aa)) form an N-acetyltransferase region. UDP-N-acetyl-alpha-D-glucosamine contacts are provided by Arg-332 and Lys-350. His-362 serves as the catalytic Proton acceptor. 2 residues coordinate UDP-N-acetyl-alpha-D-glucosamine: Tyr-365 and Asn-376. Acetyl-CoA-binding positions include Ala-379, 385 to 386 (NY), Ser-404, Ala-422, and Arg-439.

The protein in the N-terminal section; belongs to the N-acetylglucosamine-1-phosphate uridyltransferase family. In the C-terminal section; belongs to the transferase hexapeptide repeat family. As to quaternary structure, homotrimer. The cofactor is Mg(2+).

The protein resides in the cytoplasm. The enzyme catalyses alpha-D-glucosamine 1-phosphate + acetyl-CoA = N-acetyl-alpha-D-glucosamine 1-phosphate + CoA + H(+). The catalysed reaction is N-acetyl-alpha-D-glucosamine 1-phosphate + UTP + H(+) = UDP-N-acetyl-alpha-D-glucosamine + diphosphate. It participates in nucleotide-sugar biosynthesis; UDP-N-acetyl-alpha-D-glucosamine biosynthesis; N-acetyl-alpha-D-glucosamine 1-phosphate from alpha-D-glucosamine 6-phosphate (route II): step 2/2. It functions in the pathway nucleotide-sugar biosynthesis; UDP-N-acetyl-alpha-D-glucosamine biosynthesis; UDP-N-acetyl-alpha-D-glucosamine from N-acetyl-alpha-D-glucosamine 1-phosphate: step 1/1. The protein operates within bacterial outer membrane biogenesis; LPS lipid A biosynthesis. In terms of biological role, catalyzes the last two sequential reactions in the de novo biosynthetic pathway for UDP-N-acetylglucosamine (UDP-GlcNAc). The C-terminal domain catalyzes the transfer of acetyl group from acetyl coenzyme A to glucosamine-1-phosphate (GlcN-1-P) to produce N-acetylglucosamine-1-phosphate (GlcNAc-1-P), which is converted into UDP-GlcNAc by the transfer of uridine 5-monophosphate (from uridine 5-triphosphate), a reaction catalyzed by the N-terminal domain. The protein is Bifunctional protein GlmU of Streptococcus pyogenes serotype M49 (strain NZ131).